Here is a 405-residue protein sequence, read N- to C-terminus: L-rhamnonate dehydratase (405 aa).

His33 and Arg59 together coordinate substrate. Mg(2+) is bound by residues Asp226, Glu252, and Glu280. His329 functions as the Proton acceptor in the catalytic mechanism. Glu349 contacts substrate.

The protein belongs to the mandelate racemase/muconate lactonizing enzyme family. RhamD subfamily. Homooctamer; tetramer of dimers. Requires Mg(2+) as cofactor.

The catalysed reaction is L-rhamnonate = 2-dehydro-3-deoxy-L-rhamnonate + H2O. Its function is as follows. Catalyzes the dehydration of L-rhamnonate to 2-keto-3-deoxy-L-rhamnonate (KDR). The chain is L-rhamnonate dehydratase from Escherichia coli (strain SMS-3-5 / SECEC).